The primary structure comprises 72 residues: NADH dehydrogenase [ubiquinone] 1 beta subcomplex subunit 3-A (72 aa).

Residues 31 to 48 (ALPGIGIGVGAFCVYLVG) traverse the membrane as a helical segment.

This sequence belongs to the complex I NDUFB3 subunit family. As to quaternary structure, complex I is composed of at least 49 different subunits.

It localises to the mitochondrion inner membrane. Its function is as follows. Accessory subunit of the mitochondrial membrane respiratory chain NADH dehydrogenase (Complex I), that is believed not to be involved in catalysis. Complex I functions in the transfer of electrons from NADH to the respiratory chain. The immediate electron acceptor for the enzyme is believed to be ubiquinone. The sequence is that of NADH dehydrogenase [ubiquinone] 1 beta subcomplex subunit 3-A from Arabidopsis thaliana (Mouse-ear cress).